A 333-amino-acid chain; its full sequence is Glycerol-3-phosphate dehydrogenase [NAD(P)+] 2 (333 aa).

The NADPH site is built by S12, W13, R32, and K106. Residues K106 and G134 each coordinate sn-glycerol 3-phosphate. Position 138 (A138) interacts with NADPH. K189, D242, S252, R253, and N254 together coordinate sn-glycerol 3-phosphate. Catalysis depends on K189, which acts as the Proton acceptor. Residue R253 coordinates NADPH. Residues V277 and E279 each coordinate NADPH.

It belongs to the NAD-dependent glycerol-3-phosphate dehydrogenase family.

Its subcellular location is the cytoplasm. The catalysed reaction is sn-glycerol 3-phosphate + NAD(+) = dihydroxyacetone phosphate + NADH + H(+). The enzyme catalyses sn-glycerol 3-phosphate + NADP(+) = dihydroxyacetone phosphate + NADPH + H(+). Its pathway is membrane lipid metabolism; glycerophospholipid metabolism. Catalyzes the reduction of the glycolytic intermediate dihydroxyacetone phosphate (DHAP) to sn-glycerol 3-phosphate (G3P), the key precursor for phospholipid synthesis. The sequence is that of Glycerol-3-phosphate dehydrogenase [NAD(P)+] 2 from Sphingopyxis alaskensis (strain DSM 13593 / LMG 18877 / RB2256) (Sphingomonas alaskensis).